Reading from the N-terminus, the 190-residue chain is Movement protein (190 aa).

It belongs to the tombusvirus/aureusvirus movement protein p22 family.

It localises to the host membrane. Transports viral genome to neighboring plant cells directly through plasmosdesmata, without any budding. The movement protein allows efficient cell to cell propagation, by bypassing the host cell wall barrier. The protein is Movement protein of Cucumber necrosis virus (CNV).